The following is a 317-amino-acid chain: MTTALDQLKQYTTVVADTGDFQQLAQYKPQDATTNPSLILKAVQKDAYRPILEKTVRDHAGESVGFIIDRLLIAFGTEILKLIPGRVSTEVDARLSFDTQRSIDKGREIIKLYEAAGVGRERVLIKLASTWEGIRAAEVLQREGIRCNMTLLFSLVQAAACAEAGAQLISPFVGRIYDWYRKQKGADWDEAQDGGANDPGVQSVRRIYTYYKHFGYRTEVMGASFRTTSQITELAGCDLLTISPELLQKLHDSTEAVARKLSPDEARDARLERVAIDESSFRFQLNDDAMATEKLAEGIRLFSADAVKLEKMIEALR.

The active-site Schiff-base intermediate with substrate is Lys126.

The protein belongs to the transaldolase family. Type 1 subfamily. In terms of assembly, homodimer.

It localises to the cytoplasm. It catalyses the reaction D-sedoheptulose 7-phosphate + D-glyceraldehyde 3-phosphate = D-erythrose 4-phosphate + beta-D-fructose 6-phosphate. The protein operates within carbohydrate degradation; pentose phosphate pathway; D-glyceraldehyde 3-phosphate and beta-D-fructose 6-phosphate from D-ribose 5-phosphate and D-xylulose 5-phosphate (non-oxidative stage): step 2/3. Its function is as follows. Transaldolase is important for the balance of metabolites in the pentose-phosphate pathway. In Burkholderia mallei (strain SAVP1), this protein is Transaldolase.